A 484-amino-acid polypeptide reads, in one-letter code: Protein nucleotidyltransferase YdiU (484 aa).

The ATP site is built by Gly-81, Gly-83, Arg-84, Lys-103, Asp-115, Gly-116, Arg-166, and Arg-173. Asp-244 functions as the Proton acceptor in the catalytic mechanism. 2 residues coordinate Mg(2+): Asn-245 and Asp-254. An ATP-binding site is contributed by Asp-254.

The protein belongs to the SELO family. The cofactor is Mg(2+). Mn(2+) is required as a cofactor.

The enzyme catalyses L-seryl-[protein] + ATP = 3-O-(5'-adenylyl)-L-seryl-[protein] + diphosphate. The catalysed reaction is L-threonyl-[protein] + ATP = 3-O-(5'-adenylyl)-L-threonyl-[protein] + diphosphate. It carries out the reaction L-tyrosyl-[protein] + ATP = O-(5'-adenylyl)-L-tyrosyl-[protein] + diphosphate. It catalyses the reaction L-histidyl-[protein] + UTP = N(tele)-(5'-uridylyl)-L-histidyl-[protein] + diphosphate. The enzyme catalyses L-seryl-[protein] + UTP = O-(5'-uridylyl)-L-seryl-[protein] + diphosphate. The catalysed reaction is L-tyrosyl-[protein] + UTP = O-(5'-uridylyl)-L-tyrosyl-[protein] + diphosphate. Its function is as follows. Nucleotidyltransferase involved in the post-translational modification of proteins. It can catalyze the addition of adenosine monophosphate (AMP) or uridine monophosphate (UMP) to a protein, resulting in modifications known as AMPylation and UMPylation. The protein is Protein nucleotidyltransferase YdiU of Shewanella baltica (strain OS155 / ATCC BAA-1091).